The primary structure comprises 396 residues: 1-deoxy-D-xylulose 5-phosphate reductoisomerase (396 aa).

The NADPH site is built by T15, G16, S17, I18, G41, and N129. A 1-deoxy-D-xylulose 5-phosphate-binding site is contributed by K130. E131 contacts NADPH. D155 lines the Mn(2+) pocket. 1-deoxy-D-xylulose 5-phosphate-binding residues include S156, E157, S182, and H205. E157 provides a ligand contact to Mn(2+). An NADPH-binding site is contributed by G211. 1-deoxy-D-xylulose 5-phosphate-binding residues include S218, N223, K224, and E227. Residue E227 coordinates Mn(2+).

Belongs to the DXR family. Mg(2+) is required as a cofactor. It depends on Mn(2+) as a cofactor.

The catalysed reaction is 2-C-methyl-D-erythritol 4-phosphate + NADP(+) = 1-deoxy-D-xylulose 5-phosphate + NADPH + H(+). The protein operates within isoprenoid biosynthesis; isopentenyl diphosphate biosynthesis via DXP pathway; isopentenyl diphosphate from 1-deoxy-D-xylulose 5-phosphate: step 1/6. Its function is as follows. Catalyzes the NADPH-dependent rearrangement and reduction of 1-deoxy-D-xylulose-5-phosphate (DXP) to 2-C-methyl-D-erythritol 4-phosphate (MEP). The chain is 1-deoxy-D-xylulose 5-phosphate reductoisomerase from Xanthomonas campestris pv. campestris (strain 8004).